Here is an 809-residue protein sequence, read N- to C-terminus: Leucine--tRNA ligase (809 aa).

Positions 40-50 (PYPSGRIHMGH) match the 'HIGH' region motif. The 'KMSKS' region signature appears at 579–583 (KMSKS). K582 contributes to the ATP binding site.

This sequence belongs to the class-I aminoacyl-tRNA synthetase family.

The protein resides in the cytoplasm. The enzyme catalyses tRNA(Leu) + L-leucine + ATP = L-leucyl-tRNA(Leu) + AMP + diphosphate. The chain is Leucine--tRNA ligase from Campylobacter jejuni (strain RM1221).